Consider the following 185-residue polypeptide: Elongation factor P (185 aa).

It belongs to the elongation factor P family.

The protein resides in the cytoplasm. The protein operates within protein biosynthesis; polypeptide chain elongation. Functionally, involved in peptide bond synthesis. Stimulates efficient translation and peptide-bond synthesis on native or reconstituted 70S ribosomes in vitro. Probably functions indirectly by altering the affinity of the ribosome for aminoacyl-tRNA, thus increasing their reactivity as acceptors for peptidyl transferase. This is Elongation factor P from Bacillus mycoides (strain KBAB4) (Bacillus weihenstephanensis).